The following is a 189-amino-acid chain: UPF0301 protein PSEEN5058 (189 aa).

Belongs to the UPF0301 (AlgH) family.

This Pseudomonas entomophila (strain L48) protein is UPF0301 protein PSEEN5058.